The following is a 477-amino-acid chain: MGSYALPRSGVRRSIRVLLLALVVGVLGTATALIAPPGAHAAESTLGAAAAQSGRYFGTAIASGRLSDSTYTSIAGREFNMVTAENEMKIDATEPQRGQFNFSSADRVYNWAVQNGKQVRGHTLAWHSQQPGWMQSLSGSALRQAMIDHINGVMAHYKGKIVQWDVVNEAFADGSSGARRDSNLQRSGNDWIEVAFRTARAADPSAKLCYNDYNVENWTWAKTQAMYNMVRDFKQRGVPIDCVGFQSHFNSGSPYNSNFRTTLQNFAALGVDVAITELDIQGAPASTYANVTNDCLAVSRCLGITVWGVRDSDSWRSEQTPLLFNNDGSKKAAYTAVLDALNGGDSSEPPADGGQIKGVGSGRCLDVPDASTSDGTQLQLWDCHSGTNQQWAATDAGELRVYGDKCLDAAGTSNGSKVQIYSCWGGDNQKWRLNSDGSVVGVQSGLCLDAVGNGTANGTLIQLYTCSNGSNQRWTRT.

Positions 1–41 (MGSYALPRSGVRRSIRVLLLALVVGVLGTATALIAPPGAHA) are cleaved as a signal peptide. Residues 42 to 340 (AESTLGAAAA…KAAYTAVLDA (299 aa)) enclose the GH10 domain. Glu169 functions as the Proton donor in the catalytic mechanism. The Nucleophile role is filled by Glu277. A Ricin B-type lectin domain is found at 361–477 (SGRCLDVPDA…NGSNQRWTRT (117 aa)). Cystine bridges form between Cys364–Cys383, Cys406–Cys423, and Cys447–Cys466.

It belongs to the glycosyl hydrolase 10 (cellulase F) family.

It is found in the secreted. It catalyses the reaction Endohydrolysis of (1-&gt;4)-beta-D-xylosidic linkages in xylans.. The protein operates within glycan degradation; xylan degradation. Contributes to hydrolyze hemicellulose, the major component of plant cell-walls. XLNA and XLNB seem to act sequentially on the substrate to yield xylobiose and xylose as carbon sources. The polypeptide is Endo-1,4-beta-xylanase A (xlnA) (Streptomyces lividans).